A 96-amino-acid polypeptide reads, in one-letter code: Large ribosomal subunit protein uL23 (96 aa).

The protein belongs to the universal ribosomal protein uL23 family. Part of the 50S ribosomal subunit. Contacts protein L29, and trigger factor when it is bound to the ribosome.

Functionally, one of the early assembly proteins it binds 23S rRNA. One of the proteins that surrounds the polypeptide exit tunnel on the outside of the ribosome. Forms the main docking site for trigger factor binding to the ribosome. This Nitratidesulfovibrio vulgaris (strain DSM 19637 / Miyazaki F) (Desulfovibrio vulgaris) protein is Large ribosomal subunit protein uL23.